The chain runs to 271 residues: Aminoglycoside 3'-phosphotransferase (271 aa).

Residue Asp198 is the Proton acceptor of the active site.

This sequence belongs to the aminoglycoside phosphotransferase family.

The enzyme catalyses kanamycin A + ATP = kanamycin 3'-phosphate + ADP + H(+). Resistance to kanamycin and structurally-related aminoglycosides, including amikacin. The protein is Aminoglycoside 3'-phosphotransferase (aphA) of Escherichia coli.